The primary structure comprises 305 residues: Probable aspartoacylase (305 aa).

Zn(2+)-binding residues include H13 and E16. Substrate contacts are provided by residues R55 and N62–R63. Residue H105 coordinates Zn(2+). E163 and Y273 together coordinate substrate.

It belongs to the AspA/AstE family. Aspartoacylase subfamily. Zn(2+) is required as a cofactor.

It catalyses the reaction an N-acyl-L-aspartate + H2O = a carboxylate + L-aspartate. In Prochlorococcus marinus (strain NATL1A), this protein is Probable aspartoacylase.